A 485-amino-acid chain; its full sequence is Glutamate--tRNA ligase (485 aa).

Residues 11–21 carry the 'HIGH' region motif; it reads PSPTGHLHIGN. A 'KMSKS' region motif is present at residues 252 to 256; the sequence is KLSKR. Position 255 (Lys-255) interacts with ATP.

It belongs to the class-I aminoacyl-tRNA synthetase family. Glutamate--tRNA ligase type 1 subfamily. As to quaternary structure, monomer.

It is found in the cytoplasm. It carries out the reaction tRNA(Glu) + L-glutamate + ATP = L-glutamyl-tRNA(Glu) + AMP + diphosphate. Catalyzes the attachment of glutamate to tRNA(Glu) in a two-step reaction: glutamate is first activated by ATP to form Glu-AMP and then transferred to the acceptor end of tRNA(Glu). This Bacillus thuringiensis (strain Al Hakam) protein is Glutamate--tRNA ligase.